A 194-amino-acid chain; its full sequence is Putative manganese efflux pump MntP (194 aa).

The next 6 membrane-spanning stretches (helical) occupy residues 3-23 (FYATIILALALSMDAFAVAVC), 40-60 (GFIFGIIEASTPIIGWALGLY), 65-85 (IIQWDHWVAFGLLVILGGRMI), 109-129 (LIATGIATSLDAMAIGVGLAF), 134-154 (IVHTAMTIGMMTMIMATLGML), and 169-189 (IIGGMVLIAIGFNILFEHLDL).

It belongs to the MntP (TC 9.B.29) family.

Its subcellular location is the cell inner membrane. Probably functions as a manganese efflux pump. The polypeptide is Putative manganese efflux pump MntP (Proteus mirabilis (strain HI4320)).